The following is a 308-amino-acid chain: Aspartate carbamoyltransferase catalytic subunit (308 aa).

Carbamoyl phosphate-binding residues include arginine 57 and threonine 58. Lysine 86 contacts L-aspartate. Residues arginine 107, histidine 135, and glutamine 138 each coordinate carbamoyl phosphate. Arginine 168 and arginine 229 together coordinate L-aspartate. Residues leucine 268 and proline 269 each contribute to the carbamoyl phosphate site.

It belongs to the aspartate/ornithine carbamoyltransferase superfamily. ATCase family. As to quaternary structure, heterooligomer of catalytic and regulatory chains.

The enzyme catalyses carbamoyl phosphate + L-aspartate = N-carbamoyl-L-aspartate + phosphate + H(+). It functions in the pathway pyrimidine metabolism; UMP biosynthesis via de novo pathway; (S)-dihydroorotate from bicarbonate: step 2/3. Functionally, catalyzes the condensation of carbamoyl phosphate and aspartate to form carbamoyl aspartate and inorganic phosphate, the committed step in the de novo pyrimidine nucleotide biosynthesis pathway. The sequence is that of Aspartate carbamoyltransferase catalytic subunit from Pyrococcus abyssi (strain GE5 / Orsay).